A 250-amino-acid chain; its full sequence is Proteasome subunit alpha type-2 (250 aa).

Residue Lys-108 forms a Glycyl lysine isopeptide (Lys-Gly) (interchain with G-Cter in ubiquitin) linkage.

The protein belongs to the peptidase T1A family. The 26S proteasome consists of a 20S proteasome core and two 19S regulatory subunits. The 20S proteasome core is composed of 28 subunits that are arranged in four stacked rings, resulting in a barrel-shaped structure. The two end rings are each formed by seven alpha subunits, and the two central rings are each formed by seven beta subunits. The catalytic chamber with the active sites is on the inside of the barrel.

The protein localises to the cytoplasm. It is found in the nucleus. Its function is as follows. The proteasome degrades poly-ubiquitinated proteins in the cytoplasm and in the nucleus. It is essential for the regulated turnover of proteins and for the removal of misfolded proteins. The proteasome is a multicatalytic proteinase complex that is characterized by its ability to cleave peptides with Arg, Phe, Tyr, Leu, and Glu adjacent to the leaving group at neutral or slightly basic pH. It has an ATP-dependent proteolytic activity. In Saccharomyces cerevisiae (strain ATCC 204508 / S288c) (Baker's yeast), this protein is Proteasome subunit alpha type-2 (PRE8).